Here is a 285-residue protein sequence, read N- to C-terminus: Protease HtpX homolog (285 aa).

2 consecutive transmembrane segments (helical) span residues 7 to 27 (TAMLMAGITALFIVIGGMIGG) and 30 to 50 (GMTIALLFALAMNFFSYWFSD). His131 provides a ligand contact to Zn(2+). Glu132 is a catalytic residue. Residue His135 participates in Zn(2+) binding. The next 2 membrane-spanning stretches (helical) occupy residues 146-166 (ITATMAGAISALANFAMFFGG) and 177-197 (IAGIAVALLAPIAGALIQMAI). Glu202 contacts Zn(2+).

This sequence belongs to the peptidase M48B family. Requires Zn(2+) as cofactor.

The protein localises to the cell inner membrane. This Burkholderia ambifaria (strain MC40-6) protein is Protease HtpX homolog.